The following is a 479-amino-acid chain: U3 snoRNP-associated protein-like EMB2271 (479 aa).

The disordered stretch occupies residues 1-73 (MKLEKKKGIG…AHETVGEKRK (73 aa)). Residues 8-17 (GIGAKRRGKK) show a composition bias toward basic residues. Residues 18-38 (SSIDHDPFLEEETEKRRKFNY) show a composition bias toward basic and acidic residues. Residues 39 to 51 (DDDDDIESVESEE) are compositionally biased toward acidic residues. Residues 52 to 73 (EGKVGEEVEDEFAHETVGEKRK) are compositionally biased toward basic and acidic residues. 7 WD repeats span residues 143–182 (KHQHSVTGVALSDDDSRGFSVSKDGTILHWDVSSGKSDEY), 204–243 (RHNKQSLALAVSSDGRYLATGGVDCHVHLWDIRTREHVQA), 246–285 (GHCGIVSSLCFREGTAELFSGSYDGTLSIWNAEHRTYIES), 288–326 (GHQSELLSIDALGRERVLSVGRDRTMQLYKVPESTRLIY), 328–366 (ASESNFECCCFVNSDEFLSGSDNGSIALWSILKKKPVFI), 386–425 (PACSWVSSVAVCRGSELAASGAGNGCVRLWGVESGSSAIQ), and 431–471 (PLPG…QNGV).

The protein belongs to the WD repeat RRP9 family.

Its subcellular location is the nucleus. It is found in the nucleolus. Functionally, component of a nucleolar small nuclear ribonucleoprotein particle (snoRNP) thought to participate in the processing and modification of pre-ribosomal RNA. Essential for embryogenesis. May function during late embryogenesis. This Arabidopsis thaliana (Mouse-ear cress) protein is U3 snoRNP-associated protein-like EMB2271.